The following is a 331-amino-acid chain: Pantothenate kinase (331 aa).

Position 109–116 (109–116) interacts with ATP; the sequence is GSVAVGKS.

It belongs to the prokaryotic pantothenate kinase family.

The protein localises to the cytoplasm. It carries out the reaction (R)-pantothenate + ATP = (R)-4'-phosphopantothenate + ADP + H(+). Its pathway is cofactor biosynthesis; coenzyme A biosynthesis; CoA from (R)-pantothenate: step 1/5. This chain is Pantothenate kinase, found in Rhizobium leguminosarum bv. trifolii (strain WSM2304).